We begin with the raw amino-acid sequence, 37 residues long: Photosystem II reaction center protein M (37 aa).

Residues 7 to 27 (AFIAVLLFLAVPTAFLLIPYV) form a helical membrane-spanning segment.

It belongs to the PsbM family. In terms of assembly, PSII is composed of 1 copy each of membrane proteins PsbA, PsbB, PsbC, PsbD, PsbE, PsbF, PsbH, PsbI, PsbJ, PsbK, PsbL, PsbM, PsbT, PsbX, PsbY, PsbZ, Psb30/Ycf12, at least 3 peripheral proteins of the oxygen-evolving complex and a large number of cofactors. It forms dimeric complexes.

The protein resides in the plastid. Its subcellular location is the chloroplast thylakoid membrane. Its function is as follows. One of the components of the core complex of photosystem II (PSII). PSII is a light-driven water:plastoquinone oxidoreductase that uses light energy to abstract electrons from H(2)O, generating O(2) and a proton gradient subsequently used for ATP formation. It consists of a core antenna complex that captures photons, and an electron transfer chain that converts photonic excitation into a charge separation. This subunit is found at the monomer-monomer interface. The sequence is that of Photosystem II reaction center protein M from Pinus thunbergii (Japanese black pine).